An 87-amino-acid chain; its full sequence is U3-theraphotoxin-Cg1c (87 aa).

The signal sequence occupies residues 1–23 (MRTFTLIAILTCAVLVIFHVSAA). The propeptide occupies 24–51 (EELEAQDVIQPEDIFTGVATLEEDRIFE). 3 cysteine pairs are disulfide-bonded: Cys-52-Cys-65, Cys-56-Cys-79, and Cys-73-Cys-84.

The protein belongs to the neurotoxin 12 (Hwtx-2) family. 03 (juruin) subfamily. As to expression, expressed by the venom gland.

The protein resides in the secreted. Its function is as follows. Probable ion channel inhibitor. In Chilobrachys guangxiensis (Chinese earth tiger tarantula), this protein is U3-theraphotoxin-Cg1c.